The primary structure comprises 483 residues: Serine/threonine-protein kinase BSK4 (483 aa).

The N-myristoyl glycine moiety is linked to residue glycine 2. The Protein kinase domain maps to 56 to 322; it reads ENVVSEHGET…DTEVLSHVLM (267 aa). ATP-binding positions include 62 to 70 and lysine 84; that span reads HGETAPNVV. Catalysis depends on aspartate 178, which acts as the Proton acceptor.

This sequence belongs to the protein kinase superfamily. Ser/Thr protein kinase family.

Its subcellular location is the cell membrane. The enzyme catalyses L-seryl-[protein] + ATP = O-phospho-L-seryl-[protein] + ADP + H(+). It catalyses the reaction L-threonyl-[protein] + ATP = O-phospho-L-threonyl-[protein] + ADP + H(+). Probable serine/threonine kinase that acts as a positive regulator of brassinosteroid (BR) signaling downstream of the receptor kinase BRI1. Functions redundantly with BSK3, BSK6, BSK7 and BSK8. In Arabidopsis thaliana (Mouse-ear cress), this protein is Serine/threonine-protein kinase BSK4.